The following is a 376-amino-acid chain: Tetraacyldisaccharide 4'-kinase (376 aa).

51–58 serves as a coordination point for ATP; sequence AVGGTGKT.

It belongs to the LpxK family.

The catalysed reaction is a lipid A disaccharide + ATP = a lipid IVA + ADP + H(+). It participates in glycolipid biosynthesis; lipid IV(A) biosynthesis; lipid IV(A) from (3R)-3-hydroxytetradecanoyl-[acyl-carrier-protein] and UDP-N-acetyl-alpha-D-glucosamine: step 6/6. In terms of biological role, transfers the gamma-phosphate of ATP to the 4'-position of a tetraacyldisaccharide 1-phosphate intermediate (termed DS-1-P) to form tetraacyldisaccharide 1,4'-bis-phosphate (lipid IVA). This Bacteroides fragilis (strain YCH46) protein is Tetraacyldisaccharide 4'-kinase.